A 434-amino-acid polypeptide reads, in one-letter code: Protein arginine N-methyltransferase 2 (434 aa).

Residues 155–198 (IQGEETTEEERKEEEPSNTSDIIDEQKVEQPKEDLKEDPSSNQE) are disordered. The span at 178–193 (DEQKVEQPKEDLKEDP) shows a compositional bias: basic and acidic residues. One can recognise an RMT2 domain in the interval 193–434 (PSSNQETYLK…YHPEARFMDV (242 aa)). Residues Tyr-200, Met-230, 258 to 263 (FGMGII), 279 to 281 (EAH), 306 to 307 (WQ), and Asp-327 contribute to the S-adenosyl-L-methionine site.

This sequence belongs to the class I-like SAM-binding methyltransferase superfamily. RMT2 methyltransferase family. In terms of assembly, monomer.

It is found in the cytoplasm. Its subcellular location is the nucleus. In terms of biological role, S-adenosyl-L-methionine-dependent protein-arginine N-methyltransferase that methylates the delta-nitrogen atom of arginine residues to form N5-methylarginine (type IV) in target proteins. Monomethylates ribosomal protein L12. The protein is Protein arginine N-methyltransferase 2 of Debaryomyces hansenii (strain ATCC 36239 / CBS 767 / BCRC 21394 / JCM 1990 / NBRC 0083 / IGC 2968) (Yeast).